The sequence spans 184 residues: Gremlin-1 (184 aa).

The N-terminal stretch at 1 to 24 is a signal peptide; the sequence is MSRTAYTVGALLLLLGTLLPAAEG. Positions 24-77 are disordered; that stretch reads GKKKGSQGAIPPPDKAQHNDSEQTQSPQQPGSRNRGRGQGRGTAMPGEEVLESS. N42 carries an N-linked (GlcNAc...) asparagine glycan. Intrachain disulfides connect C94–C144, C108–C158, C118–C176, and C122–C178. The 91-residue stretch at 94 to 184 folds into the CTCK domain; it reads CKTQPLKQTI…QCRCISIDLD (91 aa).

This sequence belongs to the DAN family. As to quaternary structure, homodimer; can also form homooligomers. Interacts with BMP2; can form higher oligomers with BMP2. Interacts with SLIT1 and SLIT2 in a glycosylation-dependent manner. In terms of tissue distribution, highly expressed in small intestine, fetal brain and colon. Expression is restricted to intestinal subepithelial myofibroblasts (ISEMFs) at the crypt base. In subjects with HMPS1, by contrast, GREM1 is expressed, not only in basal ISEMFs, but also at very high levels in epithelial cells (predominantly colonocytes), with expression extending most of the way up the sides of the crypt. Weakly expressed in brain, ovary, prostate, pancreas and skeletal muscle. In brain found in the region localized around the internal capsule in the large subcortical nuclei, including caudate, putamen, substantia nigra, thalamus and subthalamus. Predominantly expressed in normal cells including neurons, astrocytes and fibroblasts.

The protein resides in the secreted. Functionally, cytokine that may play an important role during carcinogenesis and metanephric kidney organogenesis, as a BMP antagonist required for early limb outgrowth and patterning in maintaining the FGF4-SHH feedback loop. Down-regulates the BMP4 signaling in a dose-dependent manner. Antagonist of BMP2; inhibits BMP2-mediated differentiation of osteoblasts (in vitro). Acts as inhibitor of monocyte chemotaxis. Can inhibit the growth or viability of normal cells but not transformed cells when is overexpressed. This is Gremlin-1 (GREM1) from Homo sapiens (Human).